Here is a 448-residue protein sequence, read N- to C-terminus: Damage-control phosphatase ARMT1 (448 aa).

Mn(2+)-binding residues include Asp257 and Asn258. Asp257–Asn258 contributes to the substrate binding site. Positions 262 and 295 each coordinate S-adenosyl-L-methionine. Mn(2+) is bound at residue Asp295. Substrate-binding positions include Asp371–Arg375 and Lys408. Residues Arg405 to Lys408 carry the Subfamily III RTxK motif motif.

It belongs to the damage-control phosphatase family. Sugar phosphate phosphatase III subfamily. Mn(2+) is required as a cofactor. Ni(2+) serves as cofactor. In terms of processing, automethylated.

The enzyme catalyses beta-D-fructose 1-phosphate + H2O = D-fructose + phosphate. It catalyses the reaction beta-D-fructose 6-phosphate = dihydroxyacetone + D-glyceraldehyde 3-phosphate. It carries out the reaction L-glutamyl-[protein] + S-adenosyl-L-methionine = [protein]-L-glutamate 5-O-methyl ester + S-adenosyl-L-homocysteine. Metal-dependent phosphatase that shows phosphatase activity against several substrates, including fructose-1-phosphate and fructose-6-phosphate. Its preference for fructose-1-phosphate, a strong glycating agent that causes DNA damage rather than a canonical yeast metabolite, suggests a damage-control function in hexose phosphate metabolism. Has also been shown to have O-methyltransferase activity that methylates glutamate residues of target proteins to form gamma-glutamyl methyl ester residues. Possibly methylates PCNA, suggesting it is involved in the DNA damage response. This Danio rerio (Zebrafish) protein is Damage-control phosphatase ARMT1.